The following is a 415-amino-acid chain: Fructose-like permease IIC component 1 (415 aa).

At 1–46 (MAIKKRSATVVPGASGAAAAVKNPQASKTSFWGELPQHVMSGISRM) the chain is on the cytoplasmic side. One can recognise a PTS EIIC type-2 domain in the interval 35 to 410 (LPQHVMSGIS…RLMMFRKGKL (376 aa)). Residues 47–67 (VPTLIMGGVILAFSQLIAYSW) form a helical membrane-spanning segment. At 68-101 (LKIPAEIGIMDALNSGKFSGFDLSLLKFAWLSQS) the chain is on the periplasmic side. A helical membrane pass occupies residues 102 to 122 (FGGVLFGFAIPMFAAFVANSI). Residues 123–126 (GGKL) lie on the Cytoplasmic side of the membrane. Residues 127 to 147 (AFPAGFIGGLMSTQPTQLLNF) traverse the membrane as a helical segment. Residues 148 to 157 (DPSTMQWATS) lie on the Periplasmic side of the membrane. Residues 158 to 178 (SPVPSTFIGALIISIVAGYLV) traverse the membrane as a helical segment. Residues 179 to 197 (KWMNQKIQLPDFLLAFKTT) lie on the Cytoplasmic side of the membrane. A helical membrane pass occupies residues 198–218 (FLLPILSAIFVMLAMYYVITP). The Periplasmic portion of the chain corresponds to 219–237 (FGGWINGGIRTVLTAAGEK). Residues 238–258 (GALMYAMGIAAATAIDLGGPI) traverse the membrane as a helical segment. Topologically, residues 259–276 (NKAAGFVAFSFTTDHVLP) are cytoplasmic. A helical membrane pass occupies residues 277–297 (VTARSIAIVIPPIGLGLATII). Over 298–318 (DRRLTGKRLFNAQLYPQGKTA) the chain is Periplasmic. The chain crosses the membrane as a helical span at residues 319–339 (MFLAFMGISEGAIPFALESPI). At 340-341 (TA) the chain is on the cytoplasmic side. The chain crosses the membrane as a helical span at residues 342–362 (IPSYMVGAIVGSTAAVWLGAV). The Periplasmic portion of the chain corresponds to 363-378 (QWFPESAIWAWPLVTN). Residues 379 to 399 (LGVYMAGIALGAVITALMVVF) form a helical membrane-spanning segment. The Cytoplasmic segment spans residues 400-415 (LRLMMFRKGKLLIDSL).

It is found in the cell inner membrane. In terms of biological role, the phosphoenolpyruvate-dependent sugar phosphotransferase system (PTS), a major carbohydrate active -transport system, catalyzes the phosphorylation of incoming sugar substrates concomitant with their translocation across the cell membrane. The sequence is that of Fructose-like permease IIC component 1 (fryC) from Escherichia coli (strain K12).